The sequence spans 620 residues: MSPEALSELISSIAHNLVAAGQAGALTDELIPPVDKLAVMRPKDRAHGDWASNIAMQLAKKAGMKPRDLAEPFAAALAEADGIAKVEVAGPGFINITLDSASAAAVVDAVLAAGAVTDADKHLNKVNEYGRNDHLGGQTLNLEFVSANPTGPIHIGGTRWAAVGDAMARVLEANGAKVVREYYFNDHGEQINRFAKSLVAAWAEANNLGEAGYQTETPCDGYKGAYINEIAARVQAEAESDGVDLTALAHQDQGLNDDGEPLGEADTEVREEFRKRAVPMMFDEIQKSMKDFRVNFDVWFHENSLYADGKVDAAIEELKSRGDIFDKDGATWFESTKHGDDKDRVIIKSNGEFAYFAADIAYYWDKRHRAENSADVAIYMLGADHHGYIGRMMAMCAAFGDEPGKNMQILIGQLVNVMKDGKPVRMSKRAGNVVTIDDLVSVVGVDAARYSLARSDYNQNFDIDLALLASHTNDNPVYYVQYAHARSKNVDRNAAAAGISYEGADLALLDTEADGEVLAALAQFPSVLATAADDRQPHKVARYLEELAATYHKWYNVERVVPMALTDPETRGDDEARKALEIAKNPEPARAAARLKLNDAVQQVIANGLDLLGVTAPEKM.

The 'HIGH' region motif lies at 147–157; that stretch reads ANPTGPIHIGG.

It belongs to the class-I aminoacyl-tRNA synthetase family. In terms of assembly, monomer.

The protein resides in the cytoplasm. The enzyme catalyses tRNA(Arg) + L-arginine + ATP = L-arginyl-tRNA(Arg) + AMP + diphosphate. This is Arginine--tRNA ligase from Bifidobacterium longum (strain NCC 2705).